A 171-amino-acid polypeptide reads, in one-letter code: MAMTSSGIILTTVEEVLSWGRRNSLWPVSVGLACCAIEMMHTAASRFDTDRLGIIFRGSPRQSDVLIVAGTVVNKVAPMLRLIYEQMPDPKWVISMGGCASAGGPFPTYPTLQGVDRIIPVDVYIPGCPPTPQALLWGILELQKKIKAKKEGKELIEIPIKVPQESKPISK.

The [4Fe-4S] cluster site is built by Cys34, Cys35, Cys99, and Cys128.

It belongs to the complex I 20 kDa subunit family. As to quaternary structure, NDH-1 is composed of 14 different subunits. Subunits NuoB, C, D, E, F, and G constitute the peripheral sector of the complex. [4Fe-4S] cluster serves as cofactor.

Its subcellular location is the cell inner membrane. The enzyme catalyses a quinone + NADH + 5 H(+)(in) = a quinol + NAD(+) + 4 H(+)(out). Its function is as follows. NDH-1 shuttles electrons from NADH, via FMN and iron-sulfur (Fe-S) centers, to quinones in the respiratory chain. The immediate electron acceptor for the enzyme in this species is believed to be ubiquinone. Couples the redox reaction to proton translocation (for every two electrons transferred, four hydrogen ions are translocated across the cytoplasmic membrane), and thus conserves the redox energy in a proton gradient. This chain is NADH-quinone oxidoreductase subunit B, found in Sulfurihydrogenibium sp. (strain YO3AOP1).